The primary structure comprises 228 residues: 2-C-methyl-D-erythritol 4-phosphate cytidylyltransferase (228 aa).

This sequence belongs to the IspD/TarI cytidylyltransferase family. IspD subfamily.

The catalysed reaction is 2-C-methyl-D-erythritol 4-phosphate + CTP + H(+) = 4-CDP-2-C-methyl-D-erythritol + diphosphate. It participates in isoprenoid biosynthesis; isopentenyl diphosphate biosynthesis via DXP pathway; isopentenyl diphosphate from 1-deoxy-D-xylulose 5-phosphate: step 2/6. In terms of biological role, catalyzes the formation of 4-diphosphocytidyl-2-C-methyl-D-erythritol from CTP and 2-C-methyl-D-erythritol 4-phosphate (MEP). In Nostoc sp. (strain PCC 7120 / SAG 25.82 / UTEX 2576), this protein is 2-C-methyl-D-erythritol 4-phosphate cytidylyltransferase.